A 181-amino-acid chain; its full sequence is Adenine phosphoribosyltransferase (181 aa).

The protein belongs to the purine/pyrimidine phosphoribosyltransferase family. In terms of assembly, homodimer.

The protein localises to the cytoplasm. It carries out the reaction AMP + diphosphate = 5-phospho-alpha-D-ribose 1-diphosphate + adenine. Its pathway is purine metabolism; AMP biosynthesis via salvage pathway; AMP from adenine: step 1/1. Catalyzes a salvage reaction resulting in the formation of AMP, that is energically less costly than de novo synthesis. The chain is Adenine phosphoribosyltransferase from Aliivibrio fischeri (strain ATCC 700601 / ES114) (Vibrio fischeri).